Reading from the N-terminus, the 253-residue chain is Uracil-DNA glycosylase (253 aa).

D79 functions as the Proton acceptor in the catalytic mechanism.

This sequence belongs to the uracil-DNA glycosylase (UDG) superfamily. UNG family.

Its subcellular location is the cytoplasm. It carries out the reaction Hydrolyzes single-stranded DNA or mismatched double-stranded DNA and polynucleotides, releasing free uracil.. Functionally, excises uracil residues from the DNA which can arise as a result of misincorporation of dUMP residues by DNA polymerase or due to deamination of cytosine. In Xylella fastidiosa (strain M12), this protein is Uracil-DNA glycosylase.